The following is a 196-amino-acid chain: HTH-type transcriptional regulator Hpr (196 aa).

The region spanning 13 to 157 (SIVFSHKMAL…LICIVRHIYG (145 aa)) is the HTH marR-type domain. The H-T-H motif DNA-binding region spans 63–86 (ISDIASHGVMHVSTAFNFSKKLEA).

As to quaternary structure, homodimer.

In terms of biological role, negative regulator of protease production and sporulation. The protein is HTH-type transcriptional regulator Hpr of Shouchella clausii (strain KSM-K16) (Alkalihalobacillus clausii).